The chain runs to 443 residues: Probable D-serine dehydratase (443 aa).

K116 carries the N6-(pyridoxal phosphate)lysine modification.

It belongs to the serine/threonine dehydratase family. DsdA subfamily. Pyridoxal 5'-phosphate is required as a cofactor.

The enzyme catalyses D-serine = pyruvate + NH4(+). The chain is Probable D-serine dehydratase from Bacillus cereus (strain G9842).